We begin with the raw amino-acid sequence, 1788 residues long: MMQVSQGTIGSPWHQAYHSSSSTSDLSGYNHEFLRRSPDQYSSRGSMESLDQASAAYHHHLPPAKSTNCIDQLVHLHNKRDSAYSSFSTNASIPEYRSSPFSKERSYSMESMHSRNSSGQEGIKHADIKYIKTVYDVQRGISEEYEVNSSSVKNRNYSRQPAYNRHSIGPHGRLEQSRFFSESGGFERAAPMPPTRSDSYALTRHHERPNSWSSLDQNRNFRTPKAAGLHSTNTSSNAAQQPKHVHGDGHLHPVLERSPESSPLIKPKQVYSETPQPGQPMLPTGIYPVPAPEPHFAHAPQPPKNNNGRLYPALAKEGSYGAKSSEKVLPFSEPNKNEKDTQNLRSKSVGQYPMNHSVKEREKKQEGPTGFAHYKLHFTAGPDISTSSLTNDRNDQQPLRLDNIDINEQQKNGTKVAEEFSVYAHPAFQNEWSDSKTKQDIASSDIIGLHRNSLSSDAHGEHEYHNHFNIASSSHNKMDERSNRQADHRKKLESLSFTVHADEADGPSSNPLKPDESPSPSQKKSYDFTRRRLSSSSSQSSKTDGNKLSSVFDKVCKIEQREHENHRSQFLCGNINQSGLSTRGQNNKGSFTMVEEIRNKFISQDQTPNPNEWRRLSSSHSNEKVTGMHQLTRQGIVYGLQTGDAQKQMPEKQAEKMHSYNQEQNILQAVPDDDNRSFNSQTMPNKEDDWQCAAQDTLGFNRAYRNSVKDAQCKVLEATSYRRKDLEISPPHYKKPEKNVRPASAPFRKKSSSLSPHAPKERHSVTPTDNCASIQESQGVFFPSRIGAKRRITAEQKKRSYSEPEKMNEVGASESESAPLTVSKMEPVASFSENSVADRRRIFEREGKACSTINLSKPQLKQLQQNALADYIERKTGRRPSSQETRLLKERSQSTYFSGSIMDNQSMTSTSSMNSLNEHNLSYRHREPLSKTGRVSSTLPPGLTGFFDLSSFENNPEYPENRSRSSSFAHQLRSERLLDHRSKVEFGKGRETNKPKEVSLQSDDDVIITSSRRHGKSASAEDLLDRLPQPPALHVRSRSSPASDMKSREYMSRQEVGNKTSYASASNKEIRSIKSNHFEQMSFTPSFKNHIDTGEDPVPENSSTIQRSAQLENQRNTKTQSISGIYSPHPETKQEPLALPIHSVPAKVTQTSLAHATFDYITAEEYLYSGKRGKESASPTDNKEISDQEWCLPENSSSEDLNDPERFAKYTSAQRPQSFETKSGNSINETVQQNKSSGPTAGPKFSTSWKSNGMWSSGSSEAETTFNHGKISLHISESCLQPQSPMTGQEDEGDDEVFVKEQDTESFSGTFVPPSPPPFPPPSLEDALLKQRIEKFPLVPNTLDEIWENTEEASTQVKVKSNERYLQCASEYTASTESSGSYLLNSGITKRDTDGPLLRLSSIVPAPEPLASPVDPTKPIEEQETQPHGADTSILQSSEGNFNPSDSQSTLPHVRSELMSSEDAKSQELAKEIVTKDKSLANILDPDSRMKTTMDLMEGLFTKSSSALKEKNQKRKAKKQIDNIIAPESEXKEEKRETLDNASNYSAYYSTSAPKAELLRKMKTIHSQIGGKEEQFDVNEKKAELISSLTCKLEVLKDAKESLIDDIKLNNSLGEEVETQIETLCKPNEFDKYKMFIGDLDKVVNLLLSLSGRLARVENALSSLGEDASAEERKTWNEKKKQLCGQHEDARELKENLDRREKLVMDFLGNYLTGEEFAHYQHFVKMKSALLIEQRELDDKIKLGQEQLRCLTESLPSDYLISMKVSLPEERRSSLGNKSLPPPLTSSL.

Disordered regions lie at residues 1–25 (MMQVSQGTIGSPWHQAYHSSSSTSD), 146–174 (EVNSSSVKNRNYSRQPAYNRHSIGPHGRL), 225–263 (KAAGLHSTNTSSNAAQQPKHVHGDGHLHPVLERSPESSP), 321–367 (GAKS…KQEG), 382–401 (PDISTSSLTNDRNDQQPLRL), 469–488 (NIASSSHNKMDERSNRQADH), 498–548 (TVHA…GNKL), 727–768 (EISP…VTPT), 793–821 (TAEQKKRSYSEPEKMNEVGASESESAPLT), 876–915 (TGRRPSSQETRLLKERSQSTYFSGSIMDNQSMTSTSSMNS), 1011–1067 (SRRH…SASN), 1086–1133 (SFKN…PETK), 1171–1263 (KRGK…SEAE), 1303–1324 (DTESFSGTFVPPSPPPFPPPSL), 1404–1467 (VPAP…AKSQ), and 1507–1538 (ALKEKNQKRKAKKQIDNIIAPESEXKEEKRET). Composition is skewed to polar residues over residues 147 to 161 (VNSSSVKNRNYSRQP) and 230 to 240 (HSTNTSSNAAQ). Composition is skewed to basic and acidic residues over residues 245 to 259 (VHGDGHLHPVLERSP) and 357 to 366 (SVKEREKKQE). Basic and acidic residues predominate over residues 476 to 488 (NKMDERSNRQADH). The 104-residue stretch at 708–811 (VKDAQCKVLE…SEPEKMNEVG (104 aa)) folds into the ASD1 domain. The segment covering 793-808 (TAEQKKRSYSEPEKMN) has biased composition (basic and acidic residues). Residues 893-903 (QSTYFSGSIMD) are compositionally biased toward polar residues. Positions 904 to 915 (NQSMTSTSSMNS) are enriched in low complexity. Composition is skewed to polar residues over residues 1055 to 1067 (EVGNKTSYASASN), 1100 to 1124 (ENSSTIQRSAQLENQRNTKTQSISG), and 1211 to 1263 (TSAQ…SEAE). Pro residues predominate over residues 1313–1323 (PPSPPPFPPPS). Over residues 1433 to 1451 (SILQSSEGNFNPSDSQSTL) the composition is skewed to polar residues. Residues 1467-1756 (QELAKEIVTK…QLRCLTESLP (290 aa)) enclose the ASD2 domain. A compositionally biased stretch (basic and acidic residues) spans 1529-1538 (SEXKEEKRET). Residues 1653–1708 (RLARVENALSSLGEDASAEERKTWNEKKKQLCGQHEDARELKENLDRREKLVMDFL) adopt a coiled-coil conformation.

The protein belongs to the shroom family. Interacts with F-actin. Interacts with ROCK1. As to expression, expressed in epithelial cells of the cement gland.

It is found in the cell junction. Its subcellular location is the adherens junction. The protein resides in the cytoplasm. It localises to the cytoskeleton. The protein localises to the apical cell membrane. In terms of biological role, controls cell shape changes in the neuroepithelium during neural tube closure. Induces apical constriction in epithelial cells by promoting the apical accumulation of F-actin and myosin II, and probably by bundling stress fibers. Induces apicobasal cell elongation by redistributing gamma-tubulin and directing the assembly of robust apicobasal microtubule arrays. This Xenopus laevis (African clawed frog) protein is Protein Shroom3 (shroom3).